The sequence spans 416 residues: Na(+)/H(+) antiporter NhaA (416 aa).

The next 11 membrane-spanning stretches (helical) occupy residues glycine 39–alanine 59, leucine 82–isoleucine 102, leucine 119–valine 139, glycine 146–glycine 166, valine 175–phenylalanine 195, glycine 198–leucine 218, alanine 234–leucine 254, proline 281–glycine 301, leucine 315–alanine 335, tryptophan 353–isoleucine 373, and glycine 390–glutamine 410.

This sequence belongs to the NhaA Na(+)/H(+) (TC 2.A.33) antiporter family.

It is found in the cell inner membrane. The catalysed reaction is Na(+)(in) + 2 H(+)(out) = Na(+)(out) + 2 H(+)(in). Its function is as follows. Na(+)/H(+) antiporter that extrudes sodium in exchange for external protons. This is Na(+)/H(+) antiporter NhaA from Acidovorax sp. (strain JS42).